Here is a 621-residue protein sequence, read N- to C-terminus: Chaperone protein HscA homolog (621 aa).

The protein belongs to the heat shock protein 70 family.

Chaperone involved in the maturation of iron-sulfur cluster-containing proteins. Has a low intrinsic ATPase activity which is markedly stimulated by HscB. In Cupriavidus pinatubonensis (strain JMP 134 / LMG 1197) (Cupriavidus necator (strain JMP 134)), this protein is Chaperone protein HscA homolog.